The primary structure comprises 227 residues: Uracil-DNA glycosylase (227 aa).

Catalysis depends on aspartate 68, which acts as the Proton acceptor.

This sequence belongs to the uracil-DNA glycosylase (UDG) superfamily. UNG family.

The protein resides in the cytoplasm. It catalyses the reaction Hydrolyzes single-stranded DNA or mismatched double-stranded DNA and polynucleotides, releasing free uracil.. In terms of biological role, excises uracil residues from the DNA which can arise as a result of misincorporation of dUMP residues by DNA polymerase or due to deamination of cytosine. The sequence is that of Uracil-DNA glycosylase from Mycobacterium leprae (strain Br4923).